Reading from the N-terminus, the 152-residue chain is MKIESTRFGTLEVTSEQIIRFPHGIPGFLDEKAFVHLPHDENSPFSFLQSTAEADLSFLLVEPFSFIPEYEFVLGDEMAGELELSEENPPQVFLIGTVREKITDMTVNLLAPIVVNRNKGIGRQIILDKTEYSIRHKLFPEAQAQGTPEGGE.

The protein belongs to the FliW family. Interacts with translational regulator CsrA and flagellin(s).

The protein localises to the cytoplasm. Acts as an anti-CsrA protein, binds CsrA and prevents it from repressing translation of its target genes, one of which is flagellin. Binds to flagellin and participates in the assembly of the flagellum. This is Flagellar assembly factor FliW from Desulfitobacterium hafniense (strain DSM 10664 / DCB-2).